A 984-amino-acid chain; its full sequence is PAX-interacting protein 1 (984 aa).

BRCT domains are found at residues 8–93 (VPEE…GFSP) and 94–183 (ESCQ…LYHP). Positions 94-183 (ESCQIFFGIT…TRKDEALYHP (90 aa)) are interaction with PAGR1. 2 disordered regions span residues 187–271 (VYEE…PAEV) and 417–509 (QQHL…LFGH). Over residues 188–208 (YEEEEEEEEEEEGAGNEEPDS) the composition is skewed to acidic residues. A compositionally biased stretch (low complexity) spans 217–229 (KSSPASSQEGSPS). 2 positions are modified to phosphoserine: S227 and S235. The segment covering 424–454 (PYPPPPPHPFPPPPAHPHQFPQPPLQRPQPP) has biased composition (pro residues). The span at 455 to 485 (LQQQQLSHLQQQQLQHLQRLQQMQPTPTAQL) shows a compositional bias: low complexity. Residues 486–499 (PGPPAQALQPPPPQ) show a composition bias toward pro residues. The interval 505–984 (PLFGHDPAVE…TLDYESYKFN (480 aa)) is interaction with TP53BP1. BRCT domains lie at 516–609 (PEEG…RALH) and 616–704 (PGGK…TQYG). The Nuclear localization signal signature appears at 583–600 (RKRCITAHWLNTVLKKKK). The tract at residues 750–771 (KQNEVTNVQPSSKRARIEDIPP) is disordered. The span at 752 to 761 (NEVTNVQPSS) shows a compositional bias: polar residues. BRCT domains follow at residues 781-862 (TPFV…NYLL) and 883-924 (HASP…QPSF).

As to quaternary structure, interacts with the C-terminal transactivation domain of PAX2. Forms a constitutive complex with PAGR1 independently of the MLL2/MLL3 complex. Interacts with TP53BP1 (when phosphorylated at the N-terminus by ATM). Interacts with HLTF. Component of the KMT2 family MLL2/MLL3 complex (also named ASCOM complex), at least composed of the HMTs KMT2D and/or KMT2C, the common subunits ASH2L, RBBP5, WDR5 and DPY30, and the complex type-specific subunits PAXIP1/PTIP, PAGR1, NCOA6 and KDM6A; required for the association of PAGR1 with the MLL2/MLL3 complex. Interacts with NUPR1; this interaction prevents PAXIP1 inhibition of PAX2 transcription factor activity.

The protein resides in the nucleus matrix. It is found in the chromosome. In terms of biological role, involved in DNA damage response and in transcriptional regulation through histone methyltransferase (HMT) complexes. Plays a role in early development. In DNA damage response is required for cell survival after ionizing radiation. In vitro shown to be involved in the homologous recombination mechanism for the repair of double-strand breaks (DSBs). Its localization to DNA damage foci requires RNF8 and UBE2N. Recruits TP53BP1 to DNA damage foci and, at least in particular repair processes, effective DNA damage response appears to require the association with TP53BP1 phosphorylated by ATM at 'Ser-25'. Together with TP53BP1 regulates ATM association. Proposed to recruit PAGR1 to sites of DNA damage and the PAGR1:PAXIP1 complex is required for cell survival in response to DNA damage; the function is probably independent of MLL-containing histone methyltransferase (HMT) complexes. However, this function has been questioned. Promotes ubiquitination of PCNA following UV irradiation and may regulate recruitment of polymerase eta and RAD51 to chromatin after DNA damage. Proposed to be involved in transcriptional regulation by linking MLL-containing histone methyltransferase (HMT) complexes to gene promoters by interacting with promoter-bound transcription factors such as PAX2. Associates with gene promoters that are known to be regulated by KMT2D/MLL2. During immunoglobulin class switching in activated B-cells is involved in trimethylation of histone H3 at 'Lys-4' and in transcription initiation of downstream switch regions at the immunoglobulin heavy-chain (Igh) locus; this function appears to involve the recruitment of MLL-containing HMT complexes. Conflictingly, its function in transcriptional regulation during immunoglobulin class switching is reported to be independent of the MLL2/MLL3 complex. This is PAX-interacting protein 1 (PAXIP1) from Bos taurus (Bovine).